The primary structure comprises 241 residues: Uridylate kinase (241 aa).

11-14 provides a ligand contact to ATP; the sequence is KFSG. Residues 19–24 are involved in allosteric activation by GTP; it reads GENGFG. G53 is a binding site for UMP. ATP is bound by residues G54 and R58. Residues D74 and 135 to 142 contribute to the UMP site; that span reads TGNPFFTT. The ATP site is built by T162, Y168, and D171.

Belongs to the UMP kinase family. As to quaternary structure, homohexamer.

It localises to the cytoplasm. It carries out the reaction UMP + ATP = UDP + ADP. Its pathway is pyrimidine metabolism; CTP biosynthesis via de novo pathway; UDP from UMP (UMPK route): step 1/1. Allosterically activated by GTP. Inhibited by UTP. Catalyzes the reversible phosphorylation of UMP to UDP. This Wolinella succinogenes (strain ATCC 29543 / DSM 1740 / CCUG 13145 / JCM 31913 / LMG 7466 / NCTC 11488 / FDC 602W) (Vibrio succinogenes) protein is Uridylate kinase.